Consider the following 510-residue polypeptide: Ferredoxin--nitrite reductase (510 aa).

4 residues coordinate [4Fe-4S] cluster: Cys-396, Cys-402, Cys-437, and Cys-441. Cys-441 serves as a coordination point for siroheme.

Belongs to the nitrite and sulfite reductase 4Fe-4S domain family.

The catalysed reaction is 6 oxidized [2Fe-2S]-[ferredoxin] + NH4(+) + 2 H2O = nitrite + 6 reduced [2Fe-2S]-[ferredoxin] + 8 H(+). This Leptolyngbya laminosa (Phormidium laminosum) protein is Ferredoxin--nitrite reductase (nirA).